The following is a 46-amino-acid chain: U-myrmeciitoxin(01)-Mg6a (46 aa).

A signal peptide spans 1–20 (MNLKTFCFFLLGIFVTLTVT). The propeptide occupies 21-33 (VIPIANADAEADT).

In terms of processing, contains 1 disulfide bond. As to expression, expressed by the venom gland.

It localises to the secreted. This Myrmecia gulosa (Red bulldog ant) protein is U-myrmeciitoxin(01)-Mg6a.